A 236-amino-acid chain; its full sequence is UPF0502 protein Bcenmc03_4618 (236 aa).

The protein belongs to the UPF0502 family.

The chain is UPF0502 protein Bcenmc03_4618 from Burkholderia orbicola (strain MC0-3).